A 317-amino-acid polypeptide reads, in one-letter code: Large ribosomal subunit protein uL10z (317 aa).

This sequence belongs to the universal ribosomal protein uL10 family. P0 forms a pentameric complex by interaction with dimers of P1 and P2. Post-translationally, phosphorylated.

Ribosomal protein P0 is the functional equivalent of E.coli protein L10. The polypeptide is Large ribosomal subunit protein uL10z (RPP0A) (Arabidopsis thaliana (Mouse-ear cress)).